Reading from the N-terminus, the 141-residue chain is Large ribosomal subunit protein uL11 (141 aa).

This sequence belongs to the universal ribosomal protein uL11 family. In terms of assembly, part of the ribosomal stalk of the 50S ribosomal subunit. Interacts with L10 and the large rRNA to form the base of the stalk. L10 forms an elongated spine to which L12 dimers bind in a sequential fashion forming a multimeric L10(L12)X complex. Post-translationally, one or more lysine residues are methylated.

Forms part of the ribosomal stalk which helps the ribosome interact with GTP-bound translation factors. This Limosilactobacillus fermentum (strain NBRC 3956 / LMG 18251) (Lactobacillus fermentum) protein is Large ribosomal subunit protein uL11.